Consider the following 353-residue polypeptide: S-adenosylmethionine:tRNA ribosyltransferase-isomerase (353 aa).

This sequence belongs to the QueA family. In terms of assembly, monomer.

The protein resides in the cytoplasm. It carries out the reaction 7-aminomethyl-7-carbaguanosine(34) in tRNA + S-adenosyl-L-methionine = epoxyqueuosine(34) in tRNA + adenine + L-methionine + 2 H(+). It functions in the pathway tRNA modification; tRNA-queuosine biosynthesis. Its function is as follows. Transfers and isomerizes the ribose moiety from AdoMet to the 7-aminomethyl group of 7-deazaguanine (preQ1-tRNA) to give epoxyqueuosine (oQ-tRNA). The chain is S-adenosylmethionine:tRNA ribosyltransferase-isomerase from Burkholderia vietnamiensis (strain G4 / LMG 22486) (Burkholderia cepacia (strain R1808)).